A 488-amino-acid polypeptide reads, in one-letter code: Wax ester synthase/diacylglycerol acyltransferase 8 (488 aa).

Topologically, residues 1–195 (MKNEEEEPLS…AIFTIGSTMR (195 aa)) are cytoplasmic. His-135 functions as the Proton acceptor in the catalytic mechanism. Residues 196–214 (LIWNTLVDMFLLFATMLFL) form a helical membrane-spanning segment. Residues 215 to 488 (KDTKTPLKGG…RGLLKEAYKV (274 aa)) are Lumenal-facing. Residues Asn-238, Asn-252, Asn-353, and Asn-397 are each glycosylated (N-linked (GlcNAc...) asparagine).

This sequence in the N-terminal section; belongs to the long-chain O-acyltransferase family. Mostly expressed in flowers and siliques and at low levels in stems.

It is found in the cell membrane. The protein resides in the endoplasmic reticulum membrane. The catalysed reaction is an acyl-CoA + a 1,2-diacyl-sn-glycerol = a triacyl-sn-glycerol + CoA. It carries out the reaction a long chain fatty alcohol + a fatty acyl-CoA = a wax ester + CoA. It participates in glycerolipid metabolism; triacylglycerol biosynthesis. It functions in the pathway lipid metabolism. In terms of biological role, bifunctional wax ester synthase/diacylglycerol acyltransferase. Involved in cuticular wax biosynthesis. The polypeptide is Wax ester synthase/diacylglycerol acyltransferase 8 (Arabidopsis thaliana (Mouse-ear cress)).